The chain runs to 352 residues: C-X-C chemokine receptor type 4 (352 aa).

An important for chemokine binding and signaling region spans residues 1–21; that stretch reads MEGISIYTSDNYTEEMGSGDY. Over 1–38 the chain is Extracellular; the sequence is MEGISIYTSDNYTEEMGSGDYDSIKEPCFREENAHFNR. At Tyr-7 the chain carries Sulfotyrosine. Asn-11 is a glycosylation site (N-linked (GlcNAc...) asparagine). A Sulfotyrosine modification is found at Tyr-12. Ser-18 is a glycosylation site (O-linked (Xyl...) (chondroitin sulfate) serine). Tyr-21 carries the post-translational modification Sulfotyrosine. 2 cysteine pairs are disulfide-bonded: Cys-28–Cys-274 and Cys-109–Cys-186. The chain crosses the membrane as a helical span at residues 39-63; sequence IFLPTIYSIIFLTGIVGNGLVILVM. Topologically, residues 64 to 77 are cytoplasmic; that stretch reads GYQKKLRSMTDKYR. Residues 78–99 traverse the membrane as a helical segment; that stretch reads LHLSVADLLFVITLPFWAVDAV. Residues 94-97 are chemokine binding; it reads WAVD. Residues 100 to 110 lie on the Extracellular side of the membrane; that stretch reads ANWYFGNFLCK. A helical transmembrane segment spans residues 111-130; the sequence is AVHVIYTVNLYSSVLILAFI. The tract at residues 113 to 117 is chemokine binding; that stretch reads HVIYT. The Cytoplasmic portion of the chain corresponds to 131–154; sequence SLDRYLAIVHATNSQKPRKLLAEK. An Important for signaling motif is present at residues 133–135; it reads DRY. The tract at residues 135-147 is involved in dimerization; when bound to chemokine; sequence YLAIVHATNSQKP. The chain crosses the membrane as a helical span at residues 155–174; it reads VVYVGVWIPALLLTIPDFIF. Residues 175–195 lie on the Extracellular side of the membrane; the sequence is ASVSEADDRYICDRFYPNDLW. The tract at residues 186–190 is chemokine binding, important for signaling; that stretch reads CDRFY. The segment at 191-210 is involved in dimerization; sequence PNDLWVVVFQFQHIMVGLIL. A helical membrane pass occupies residues 196-216; that stretch reads VVVFQFQHIMVGLILPGIVIL. Topologically, residues 217–241 are cytoplasmic; it reads SCYCIIISKLSHSKGHQKGKALKTT. The helical transmembrane segment at 242 to 261 threads the bilayer; it reads VILILAFFACWLPYYIGISI. Residues 262–282 lie on the Extracellular side of the membrane; sequence DSFILLEIIKQGCEFENTVHK. The involved in dimerization stretch occupies residues 266–268; sequence LLE. Residues 283–302 traverse the membrane as a helical segment; sequence WISITEALAFFHCCLNPILY. Over 303-352 the chain is Cytoplasmic; that stretch reads AFLGAKFKTSAQHALTSVSRGSSLKILSKGKRGGHSSVSTESESSSFHSS. 2 positions are modified to phosphoserine: Ser-319 and Ser-321. Phosphoserine; by PKC and GRK6 occurs at positions 324 and 325. The segment at 329–352 is disordered; the sequence is LSKGKRGGHSSVSTESESSSFHSS. Residue Ser-330 is modified to Phosphoserine; by GRK6. Lys-331 participates in a covalent cross-link: Glycyl lysine isopeptide (Lys-Gly) (interchain with G-Cter in ubiquitin). Low complexity predominate over residues 337 to 352; it reads HSSVSTESESSSFHSS. Ser-339 is subject to Phosphoserine; by GRK6. Phosphoserine occurs at positions 348 and 351.

This sequence belongs to the G-protein coupled receptor 1 family. In terms of assembly, monomer. Can form homodimers. Interacts with CD164. Interacts with ARRB2; the interaction is dependent on the C-terminal phosphorylation of CXCR4 and allows activation of MAPK1 and MAPK3. Interacts with ARR3; the interaction is dependent on the C-terminal phosphorylation of CXCR4 and modulates calcium mobilization. Interacts with RNF113A; the interaction, enhanced by CXCL12, promotes CXCR4 ubiquitination and subsequent degradation. Interacts (via the cytoplasmic C-terminal) with ITCH (via the WW domains I and II); the interaction, enhanced by CXCL12, promotes CXCR4 ubiquitination and leads to its degradation. Interacts with extracellular ubiquitin. Interacts with DBN1; this interaction is enhanced by antigenic stimulation. Following LPS binding, may form a complex with GDF5, HSP90AA1 and HSPA8. Post-translationally, phosphorylated on agonist stimulation. Rapidly phosphorylated on serine and threonine residues in the C-terminal. Phosphorylation at Ser-324 and Ser-325 leads to recruitment of ITCH, ubiquitination and protein degradation. In terms of processing, ubiquitinated after ligand binding, leading to its degradation. Ubiquitinated by ITCH at the cell membrane on agonist stimulation. The ubiquitin-dependent mechanism, endosomal sorting complex required for transport (ESCRT), then targets CXCR4 for lysosomal degradation. This process is dependent also on prior Ser-/Thr-phosphorylation in the C-terminal of CXCR4. Also binding of ARRB1 to STAM negatively regulates CXCR4 sorting to lysosomes though modulating ubiquitination of SFR5S. Sulfation is required for efficient binding of CXCL12/SDF-1alpha and promotes its dimerization. Post-translationally, O- and N-glycosylated. N-glycosylation can mask coreceptor function. The O-glycosylation chondroitin sulfate attachment does not affect interaction with CXCL12/SDF-1alpha nor its coreceptor activity.

Its subcellular location is the cell membrane. It is found in the cell junction. It localises to the early endosome. The protein localises to the late endosome. The protein resides in the lysosome. Receptor for the C-X-C chemokine CXCL12/SDF-1 that transduces a signal by increasing intracellular calcium ion levels and enhancing MAPK1/MAPK3 activation. Involved in the AKT signaling cascade. Plays a role in regulation of cell migration, e.g. during wound healing. Acts as a receptor for extracellular ubiquitin; leading to enhanced intracellular calcium ions and reduced cellular cAMP levels. Binds bacterial lipopolysaccharide (LPS) et mediates LPS-induced inflammatory response, including TNF secretion by monocytes. Involved in hematopoiesis and in cardiac ventricular septum formation. Also plays an essential role in vascularization of the gastrointestinal tract, probably by regulating vascular branching and/or remodeling processes in endothelial cells. Involved in cerebellar development. In the CNS, could mediate hippocampal-neuron survival. The protein is C-X-C chemokine receptor type 4 (CXCR4) of Chlorocebus aethiops (Green monkey).